The chain runs to 470 residues: ATP synthase subunit beta (470 aa).

157-164 (GGAGVGKT) serves as a coordination point for ATP.

It belongs to the ATPase alpha/beta chains family. As to quaternary structure, F-type ATPases have 2 components, CF(1) - the catalytic core - and CF(0) - the membrane proton channel. CF(1) has five subunits: alpha(3), beta(3), gamma(1), delta(1), epsilon(1). CF(0) has three main subunits: a(1), b(2) and c(9-12). The alpha and beta chains form an alternating ring which encloses part of the gamma chain. CF(1) is attached to CF(0) by a central stalk formed by the gamma and epsilon chains, while a peripheral stalk is formed by the delta and b chains.

The protein resides in the cell inner membrane. The catalysed reaction is ATP + H2O + 4 H(+)(in) = ADP + phosphate + 5 H(+)(out). Its function is as follows. Produces ATP from ADP in the presence of a proton gradient across the membrane. The catalytic sites are hosted primarily by the beta subunits. The sequence is that of ATP synthase subunit beta from Geotalea daltonii (strain DSM 22248 / JCM 15807 / FRC-32) (Geobacter daltonii).